The primary structure comprises 181 residues: Cytochrome b6-f complex iron-sulfur subunit (181 aa).

The tract at residues 1 to 35 (MAQTGNFKSPARMSSLGQGAAPASSGAVTGGKPRE) is disordered. Helical transmembrane passes span 53–73 (VGGV…KYII) and 114–134 (GGAL…VNWV). The Rieske domain maps to 85–178 (LTVGKASEVP…ARIEGDSIII (94 aa)). 4 residues coordinate [2Fe-2S] cluster: Cys124, His126, Cys142, and His145. A disulfide bond links Cys129 and Cys144.

This sequence belongs to the Rieske iron-sulfur protein family. It depends on [2Fe-2S] cluster as a cofactor.

The protein localises to the cell inner membrane. The catalysed reaction is 2 oxidized [plastocyanin] + a plastoquinol + 2 H(+)(in) = 2 reduced [plastocyanin] + a plastoquinone + 4 H(+)(out). Component of the green S-bacteria bc-complex which consists of the Rieske protein and cytochrome b subunit and which appears to lack a cytochrome c1-equivalent. This complex has a comparatively low redox potential. The sequence is that of Cytochrome b6-f complex iron-sulfur subunit (petC) from Chlorobaculum thiosulfatiphilum (Chlorobium limicola f.sp. thiosulfatophilum).